A 270-amino-acid polypeptide reads, in one-letter code: MSDQQQLPVYKIALGIEYDGSKYYGWQRQNEVRSVQEKLEKALSQVANEPITVFCAGRTDAGVHGTGQVVHFETTAPRKDAAWTLGVNANLPDDIAVRWVKAVPDDFHARFSATARRYRYIIYNHRLRPAVLSKGVTHFYEPLDAERMHRAAQCLLGENDFTSFRAVQCQSRTPWRNVMHINVTRHGPYVVVDIKANAFVHHMVRNIVGSLMEVGAHNQPESWIAELLAAKDRTLAAATAKAEGLYLVAVDYPDRYDLPKPPMGPLFLAD.

Residue aspartate 60 is the Nucleophile of the active site. An RNA binding region spans residues 107-111 (FHARF). Position 118 (tyrosine 118) interacts with substrate. Positions 168–172 (QCQSR) are interaction with tRNA.

Belongs to the tRNA pseudouridine synthase TruA family. In terms of assembly, homodimer.

The catalysed reaction is uridine(38/39/40) in tRNA = pseudouridine(38/39/40) in tRNA. In terms of biological role, formation of pseudouridine at positions 38, 39 and 40 in the anticodon stem and loop of transfer RNAs. This is tRNA pseudouridine synthase A from Shigella boydii serotype 4 (strain Sb227).